A 70-amino-acid chain; its full sequence is Protein SlyX homolog (70 aa).

The disordered stretch occupies residues R51 to Y70.

Belongs to the SlyX family.

The polypeptide is Protein SlyX homolog (Nitrobacter hamburgensis (strain DSM 10229 / NCIMB 13809 / X14)).